Consider the following 165-residue polypeptide: UPF0763 protein NIS_0363 (165 aa).

It belongs to the UPF0763 family.

The chain is UPF0763 protein NIS_0363 from Nitratiruptor sp. (strain SB155-2).